Reading from the N-terminus, the 283-residue chain is Phosphatidylserine decarboxylase proenzyme (283 aa).

Catalysis depends on charge relay system; for autoendoproteolytic cleavage activity residues Asp90, His143, and Ser248. The Schiff-base intermediate with substrate; via pyruvic acid; for decarboxylase activity role is filled by Ser248. Ser248 is modified (pyruvic acid (Ser); by autocatalysis).

It belongs to the phosphatidylserine decarboxylase family. PSD-B subfamily. Prokaryotic type I sub-subfamily. Heterodimer of a large membrane-associated beta subunit and a small pyruvoyl-containing alpha subunit. Pyruvate is required as a cofactor. Is synthesized initially as an inactive proenzyme. Formation of the active enzyme involves a self-maturation process in which the active site pyruvoyl group is generated from an internal serine residue via an autocatalytic post-translational modification. Two non-identical subunits are generated from the proenzyme in this reaction, and the pyruvate is formed at the N-terminus of the alpha chain, which is derived from the carboxyl end of the proenzyme. The autoendoproteolytic cleavage occurs by a canonical serine protease mechanism, in which the side chain hydroxyl group of the serine supplies its oxygen atom to form the C-terminus of the beta chain, while the remainder of the serine residue undergoes an oxidative deamination to produce ammonia and the pyruvoyl prosthetic group on the alpha chain. During this reaction, the Ser that is part of the protease active site of the proenzyme becomes the pyruvoyl prosthetic group, which constitutes an essential element of the active site of the mature decarboxylase.

The protein resides in the cell membrane. It catalyses the reaction a 1,2-diacyl-sn-glycero-3-phospho-L-serine + H(+) = a 1,2-diacyl-sn-glycero-3-phosphoethanolamine + CO2. Its pathway is phospholipid metabolism; phosphatidylethanolamine biosynthesis; phosphatidylethanolamine from CDP-diacylglycerol: step 2/2. Its function is as follows. Catalyzes the formation of phosphatidylethanolamine (PtdEtn) from phosphatidylserine (PtdSer). The polypeptide is Phosphatidylserine decarboxylase proenzyme (Francisella tularensis subsp. mediasiatica (strain FSC147)).